The sequence spans 450 residues: Enolase (450 aa).

Gln-167 contacts (2R)-2-phosphoglycerate. Catalysis depends on Glu-209, which acts as the Proton donor. Mg(2+) is bound by residues Asp-250, Glu-307, and Asp-334. The (2R)-2-phosphoglycerate site is built by Lys-359, Arg-388, Ser-389, and Lys-410. Lys-359 (proton acceptor) is an active-site residue.

It belongs to the enolase family. The cofactor is Mg(2+).

It is found in the cytoplasm. The protein localises to the secreted. The protein resides in the cell surface. It carries out the reaction (2R)-2-phosphoglycerate = phosphoenolpyruvate + H2O. It functions in the pathway carbohydrate degradation; glycolysis; pyruvate from D-glyceraldehyde 3-phosphate: step 4/5. Catalyzes the reversible conversion of 2-phosphoglycerate (2-PG) into phosphoenolpyruvate (PEP). It is essential for the degradation of carbohydrates via glycolysis. Functionally, 'Moonlights' as a plasminogen receptor and plasmin activator. Contributes to host (pig) cell adhesion; anti-enolase antibodies decrease binding to porcine kidney cells about 60%. Binds host plasminogen and fibronectin in vitro; enhances the activity of host tissue-specific plasminogen activator (tPA), and helps plasminogen and tPA degrade articifial host extracellular matrices. The chain is Enolase from Mesomycoplasma hyorhinis (strain HUB-1) (Mycoplasma hyorhinis).